The sequence spans 353 residues: Photosystem II protein D1 (353 aa).

Thr-2 carries the N-acetylthreonine modification. Thr-2 carries the phosphothreonine modification. 3 helical membrane passes run 29–46 (YIGW…TATS), 118–133 (HFLL…EWEL), and 142–156 (WIAV…AATA). Chlorophyll a is bound at residue His-118. Tyr-126 contributes to the pheophytin a binding site. 2 residues coordinate [CaMn4O5] cluster: Asp-170 and Glu-189. A helical transmembrane segment spans residues 197-218 (FHMLGVAGVFGGSLFSAMHGSL). His-198 is a chlorophyll a binding site. Residues His-215 and 264-265 (SF) contribute to the a quinone site. His-215 provides a ligand contact to Fe cation. A Fe cation-binding site is contributed by His-272. Residues 274 to 288 (FLAAWPVVGIWFTAL) traverse the membrane as a helical segment. [CaMn4O5] cluster is bound by residues His-332, Glu-333, Asp-342, and Ala-344. Residues 345 to 353 (AIEAPSTNG) constitute a propeptide that is removed on maturation.

The protein belongs to the reaction center PufL/M/PsbA/D family. PSII is composed of 1 copy each of membrane proteins PsbA, PsbB, PsbC, PsbD, PsbE, PsbF, PsbH, PsbI, PsbJ, PsbK, PsbL, PsbM, PsbT, PsbX, PsbY, PsbZ, Psb30/Ycf12, at least 3 peripheral proteins of the oxygen-evolving complex and a large number of cofactors. It forms dimeric complexes. The D1/D2 heterodimer binds P680, chlorophylls that are the primary electron donor of PSII, and subsequent electron acceptors. It shares a non-heme iron and each subunit binds pheophytin, quinone, additional chlorophylls, carotenoids and lipids. D1 provides most of the ligands for the Mn4-Ca-O5 cluster of the oxygen-evolving complex (OEC). There is also a Cl(-1) ion associated with D1 and D2, which is required for oxygen evolution. The PSII complex binds additional chlorophylls, carotenoids and specific lipids. serves as cofactor. Tyr-161 forms a radical intermediate that is referred to as redox-active TyrZ, YZ or Y-Z. In terms of processing, C-terminally processed by CTPA; processing is essential to allow assembly of the oxygen-evolving complex and thus photosynthetic growth.

It localises to the plastid. The protein resides in the chloroplast thylakoid membrane. The enzyme catalyses 2 a plastoquinone + 4 hnu + 2 H2O = 2 a plastoquinol + O2. Its function is as follows. Photosystem II (PSII) is a light-driven water:plastoquinone oxidoreductase that uses light energy to abstract electrons from H(2)O, generating O(2) and a proton gradient subsequently used for ATP formation. It consists of a core antenna complex that captures photons, and an electron transfer chain that converts photonic excitation into a charge separation. The D1/D2 (PsbA/PsbD) reaction center heterodimer binds P680, the primary electron donor of PSII as well as several subsequent electron acceptors. This is Photosystem II protein D1 from Nicotiana debneyi (Debney's tobacco).